A 689-amino-acid chain; its full sequence is Glycine--tRNA ligase beta subunit (689 aa).

The protein belongs to the class-II aminoacyl-tRNA synthetase family. In terms of assembly, tetramer of two alpha and two beta subunits.

It is found in the cytoplasm. It carries out the reaction tRNA(Gly) + glycine + ATP = glycyl-tRNA(Gly) + AMP + diphosphate. The polypeptide is Glycine--tRNA ligase beta subunit (Pectobacterium atrosepticum (strain SCRI 1043 / ATCC BAA-672) (Erwinia carotovora subsp. atroseptica)).